The sequence spans 689 residues: MQDIQLDKRLSELLSQAVTPQTAQPLMQALSQSLNEHNIRYYVDDAPSITDSEYDRLMQQLKKLEAEYPQFVLADSPTQRVGGLALAKFEQITHLKPMLSLDNAFDEADFTAFHKRVSDRVGQVSFCCEPKLDGLAVSILYRNGVLERAATRGDGTVGEDITENVKTIKSIPLRLRGNNYPELVEVRGEAFMPKAAFEALNERARLKDDKQFVNPRNAAAGSLRQLDSKITASRALSFYAYALGVVEPSSHELAKTHYEQLQQLKSWGLPVSSEIKVCDELNQVFAYYKDILTRRSDLPFEIDGVVMKVNDIAQQQTLGFVAKSPRWAIAYKFPAQEEMTLLEGVDFQVGRTGAVTPVARLKPVFVGGVTVSNATLHNADEIERLGVMVGDTVIIRRAGDVIPQIVAIVPERRSEDAQAIVFPQHCPVCGSLVERLEGEAVARCSGGLFCEAQRKEAIKHFASRKALDIDGMGDKIVEQLIDKELVQSPADLFKLTASMMTMLDRMGMKSATNLALAIEAAKTTTLPRFLYALGIREVGEATAANLAAHFGSLDALRIATIEQLIEVEDIGEVVAQHVAHFFAQPHNLEVIDALIAAGVNWPAIEAPSADEQPLKGQTWVLTGTLNQLNRNDAKAQLQVLGAKVAGSVSKNTDCLVAGEAAGSKLAKAQELGVKVIGEDELLALLAANR.

Residues 51–55, 100–101, and Glu129 each bind NAD(+); these read DSEYD and SL. Lys131 (N6-AMP-lysine intermediate) is an active-site residue. 4 residues coordinate NAD(+): Arg152, Glu189, Lys308, and Lys332. Cys426, Cys429, Cys444, and Cys450 together coordinate Zn(2+). Residues 609 to 689 form the BRCT domain; it reads ADEQPLKGQT…ELLALLAANR (81 aa).

It belongs to the NAD-dependent DNA ligase family. LigA subfamily. It depends on Mg(2+) as a cofactor. Requires Mn(2+) as cofactor.

It catalyses the reaction NAD(+) + (deoxyribonucleotide)n-3'-hydroxyl + 5'-phospho-(deoxyribonucleotide)m = (deoxyribonucleotide)n+m + AMP + beta-nicotinamide D-nucleotide.. Its function is as follows. DNA ligase that catalyzes the formation of phosphodiester linkages between 5'-phosphoryl and 3'-hydroxyl groups in double-stranded DNA using NAD as a coenzyme and as the energy source for the reaction. It is essential for DNA replication and repair of damaged DNA. This Shewanella oneidensis (strain ATCC 700550 / JCM 31522 / CIP 106686 / LMG 19005 / NCIMB 14063 / MR-1) protein is DNA ligase.